Consider the following 463-residue polypeptide: NADH-quinone oxidoreductase subunit N (463 aa).

Transmembrane regions (helical) follow at residues Leu-5 to Leu-25, Ala-34 to Leu-54, Phe-72 to Leu-92, Lys-99 to Gly-119, Phe-120 to Leu-140, Tyr-154 to Gly-174, Leu-196 to His-216, Val-230 to Leu-250, Ala-259 to Ile-279, Lys-286 to Leu-303, Leu-314 to Ile-334, Ala-356 to Leu-376, Val-393 to Leu-413, and Leu-432 to Leu-452.

The protein belongs to the complex I subunit 2 family. As to quaternary structure, NDH-1 is composed of 14 different subunits. Subunits NuoA, H, J, K, L, M, N constitute the membrane sector of the complex.

The protein localises to the cell inner membrane. It catalyses the reaction a quinone + NADH + 5 H(+)(in) = a quinol + NAD(+) + 4 H(+)(out). In terms of biological role, NDH-1 shuttles electrons from NADH, via FMN and iron-sulfur (Fe-S) centers, to quinones in the respiratory chain. The immediate electron acceptor for the enzyme in this species is believed to be ubiquinone. Couples the redox reaction to proton translocation (for every two electrons transferred, four hydrogen ions are translocated across the cytoplasmic membrane), and thus conserves the redox energy in a proton gradient. This chain is NADH-quinone oxidoreductase subunit N, found in Pelobacter propionicus (strain DSM 2379 / NBRC 103807 / OttBd1).